The chain runs to 109 residues: Putative double-stranded DNA mimic protein CKO_01325 (109 aa).

Belongs to the putative dsDNA mimic protein family.

May act as a double-stranded DNA (dsDNA) mimic. Probably regulates the activity of a dsDNA-binding protein. This Citrobacter koseri (strain ATCC BAA-895 / CDC 4225-83 / SGSC4696) protein is Putative double-stranded DNA mimic protein CKO_01325.